The chain runs to 89 residues: MANIKSKVKSIAKQEEFRQRNNAMKTRVRKAIRAAREAVLAKEEGFEKKVFEAHSIIATAVQKGVYHPNKGARKSSRLDHFVNEQKSKQ.

The tract at residues 68-89 is disordered; the sequence is PNKGARKSSRLDHFVNEQKSKQ. A compositionally biased stretch (basic and acidic residues) spans 76 to 89; that stretch reads SRLDHFVNEQKSKQ.

This sequence belongs to the bacterial ribosomal protein bS20 family.

Binds directly to 16S ribosomal RNA. In Mycoplasmopsis agalactiae (strain NCTC 10123 / CIP 59.7 / PG2) (Mycoplasma agalactiae), this protein is Small ribosomal subunit protein bS20.